We begin with the raw amino-acid sequence, 49 residues long: Soritesidine (49 aa).

It localises to the secreted. Functionally, very potent toxin that exhibits a wide range of toxicities over various organisms and cells including brine shrimp larvae (Artemia salina), sea hare eggs (Aplysia kurodai), mice, and cultured mammalian cells. An SOR-containing fraction cleaves plasmid DNA in a bivalent metal ion dependent manner suggesting genotoxicity of SOR. In Spongosorites sp. (strain QM G324170) (Okinawan marine Sponge), this protein is Soritesidine.